The chain runs to 465 residues: U4/U6 small nuclear ribonucleoprotein PRP4 (465 aa).

7 WD repeats span residues 173-212 (VSTKPISAVSLSTDDMVVATGSWAGDLQVLNSQTLQPLTQ), 216-256 (SHVG…GGLR), 263-302 (GHERRISDVKYHPSGKFIGSASHDMTWRLWDASTHQELLL), 305-344 (GHDKGVFSLSFQCDGSLVCSGGMDSLSMLWDIRSGSKVMT), 347-386 (GHSKPIYTVAWSPNGYQVATGGGDGIINVWDIRKRDEGQL), 391-432 (AHRN…KMGS), and 435-464 (GHTDKIISLDISNNSHFLVSGGWDRSIKLW).

In terms of assembly, component of the U4/U6-U5 tri-snRNP complex composed of the U4, U6 and U5 snRNAs and at least PRP3, PRP4, PRP6, PRP8, PRP18, PRP31, PRP38, SNU13, SNU23, SNU66, SNU114, SPP381, SMB1, SMD1, SMD2, SMD3, SMX2, SMX3, LSM2, LSM3, LSM4, LSM5, LSM6, LSM7, LSM8, BRR2 and DIB1.

The protein resides in the nucleus. Functionally, involved in RNA splicing. Is required for the association of U4/U6 snRNP with U5 snRNP in an early step of spliceosome assembly. The protein is U4/U6 small nuclear ribonucleoprotein PRP4 (PRP4) of Saccharomyces cerevisiae (strain ATCC 204508 / S288c) (Baker's yeast).